The sequence spans 1165 residues: Transient receptor potential cation channel subfamily M member 5 (1165 aa).

The Cytoplasmic segment spans residues 1–715 (MVEKSSERFD…LRRWNRFWSA (715 aa)). A Phosphoserine modification is found at Ser-121. The Ca(2+) site is built by Glu-212, Cys-324, Asp-333, Asp-336, and Glu-337. Residues 716–740 (PVTVFMGNVIMYFAFLILFSYVLLL) traverse the membrane as a helical segment. Residues 741–751 (DFRPPPPYGPS) lie on the Extracellular side of the membrane. The chain crosses the membrane as a helical span at residues 752–771 (AAEIILYFWVFTLVLEEIRQ). Residues Glu-768 and Gln-771 each contribute to the Ca(2+) site. Residues 772-792 (SFFTDEDMSILKKMKLYVEDN) are Cytoplasmic-facing. A helical membrane pass occupies residues 793–811 (WNKCDMVAISLFVVGLSCR). Ca(2+) contacts are provided by Asn-794 and Asp-797. The Extracellular portion of the chain corresponds to 812 to 818 (MAMSTYE). A helical membrane pass occupies residues 819-841 (AGRTVLALDFMVFTLRLIHIFAI). Residues 842–850 (HKQLGPKII) are Cytoplasmic-facing. Residues 851 to 880 (IVERMIKDVFFFLFFLSVWLIAYGVTTQAL) traverse the membrane as a helical segment. Residues 881–889 (LHPNDPRID) lie on the Extracellular side of the membrane. An intramembrane region (pore-forming) is located at residues 890 to 930 (WVFRRALYRPYLHIFGQIPLEEIDAAKMPDDNCTTDVQEII). A Selectivity filter motif is present at residues 904-906 (FGQ). Residues 931–942 (LGTLPPCPNIYA) lie on the Extracellular side of the membrane. The helical transmembrane segment at 943–977 (NWLVILLLVIYLLVTNVLLLNLLIAMFSYTFQVVQ) threads the bilayer. Over 978–1165 (ENADIFWKFQ…TDKKLPFIDH (188 aa)) the chain is Cytoplasmic. Residue Glu-994 participates in Ca(2+) binding. Residues 1122 to 1165 (RDAPKAPRSIAGSSRDQQPQGAKRQQPAGHPAYGTDKKLPFIDH) are disordered. Positions 1132–1141 (AGSSRDQQPQ) are enriched in polar residues. The segment covering 1156–1165 (TDKKLPFIDH) has biased composition (basic and acidic residues).

The protein belongs to the transient receptor (TC 1.A.4) family. LTrpC subfamily. TRPM5 sub-subfamily. As to quaternary structure, homotetramer.

It is found in the cell membrane. The catalysed reaction is Na(+)(in) = Na(+)(out). It catalyses the reaction K(+)(in) = K(+)(out). With respect to regulation, ca(2+)-activated cation channel. Displays voltage dependence modulation. Regulated by PI(4,5)P2 levels. PI(4,5)P 2 reverses the Ca(2+) -induced desensitization of channels. Is highly temperature-sensitive. Monovalent cation-selective ion channel activated by intracellular Ca(2+) in a voltage- and temperature-dependent manner. Mediates the transport of Na(+), K(+) and Cs(+) ions equally well. Activated directly by increase in intracellular Ca(2+), but is impermeable to it. The activation mechanism of TRPM5 involves a multistep process. TRPM5 activation involves ligand binding (i.e., tastant molecule, glucose stimulation) to Gq/G-protein coupled receptors (GPCR) and leads to the breakdown of phosphatidylinositol bisphosphate (PIP2) into diacylglycerol (DAG) and inositol trisphosphate (IP3), IP3 binds to its receptors in the endoplasmic reticulum and cause Ca(2+) release. Simultaneously with the intracellular Ca(2+) release, DAG activates the protein kinase C (PKC), which phosphorylates the TRPM5 channel. This phosphorylation combined with the bound Ca(2+), leads to a robust inward current allowing the entry of sodium ions (Na+) into the cell. This ion influx depolarizes the cell membrane, generating action potentials that propagate TRPM5 signals. This chain is Transient receptor potential cation channel subfamily M member 5, found in Danio rerio (Zebrafish).